The following is a 21-amino-acid chain: Dahlein-5.6 (21 aa).

As to expression, expressed by the skin dorsal glands.

The protein resides in the secreted. Its function is as follows. Has no antimicrobial activity. Strongly inhibits the formation of NO by neuronal nitric oxide synthase at micromolar concentrations. The polypeptide is Dahlein-5.6 (Ranoidea dahlii (Dahl's aquatic frog)).